A 424-amino-acid polypeptide reads, in one-letter code: Serine--tRNA ligase (424 aa).

231 to 233 contributes to the L-serine binding site; that stretch reads TAE. 262 to 264 lines the ATP pocket; it reads RAE. Glu285 serves as a coordination point for L-serine. 349 to 352 serves as a coordination point for ATP; the sequence is EISS. Ser385 serves as a coordination point for L-serine.

It belongs to the class-II aminoacyl-tRNA synthetase family. Type-1 seryl-tRNA synthetase subfamily. In terms of assembly, homodimer. The tRNA molecule binds across the dimer.

Its subcellular location is the cytoplasm. It catalyses the reaction tRNA(Ser) + L-serine + ATP = L-seryl-tRNA(Ser) + AMP + diphosphate + H(+). It carries out the reaction tRNA(Sec) + L-serine + ATP = L-seryl-tRNA(Sec) + AMP + diphosphate + H(+). The protein operates within aminoacyl-tRNA biosynthesis; selenocysteinyl-tRNA(Sec) biosynthesis; L-seryl-tRNA(Sec) from L-serine and tRNA(Sec): step 1/1. In terms of biological role, catalyzes the attachment of serine to tRNA(Ser). Is also able to aminoacylate tRNA(Sec) with serine, to form the misacylated tRNA L-seryl-tRNA(Sec), which will be further converted into selenocysteinyl-tRNA(Sec). The polypeptide is Serine--tRNA ligase (Geobacillus kaustophilus (strain HTA426)).